A 232-amino-acid polypeptide reads, in one-letter code: MAKVGKRTRSAREAFVGKDLISVEDAVALIKQAASAKFDETLEVAMNLGVDPRHADQMVRGVVTLPNGTGKTVRVAVFARGAKADEAKAAGADIVGAEDLMETIQSGKIEFDRCIATPDMMPLVGRLGKILGPRNLMPNPKVGTVTMDVKSAVEAAKGGEVQFKVEKAGVIHAGVGKMSFEADKLAQNVRAFVDAVNRAKPAGAKGTYLKKVSLSSTMGPGVSVDLTSATSH.

This sequence belongs to the universal ribosomal protein uL1 family. As to quaternary structure, part of the 50S ribosomal subunit.

Its function is as follows. Binds directly to 23S rRNA. The L1 stalk is quite mobile in the ribosome, and is involved in E site tRNA release. Protein L1 is also a translational repressor protein, it controls the translation of the L11 operon by binding to its mRNA. This chain is Large ribosomal subunit protein uL1, found in Cereibacter sphaeroides (strain ATCC 17029 / ATH 2.4.9) (Rhodobacter sphaeroides).